A 94-amino-acid chain; its full sequence is Co-chaperonin GroES (94 aa).

The protein belongs to the GroES chaperonin family. Heptamer of 7 subunits arranged in a ring. Interacts with the chaperonin GroEL.

The protein localises to the cytoplasm. Its function is as follows. Together with the chaperonin GroEL, plays an essential role in assisting protein folding. The GroEL-GroES system forms a nano-cage that allows encapsulation of the non-native substrate proteins and provides a physical environment optimized to promote and accelerate protein folding. GroES binds to the apical surface of the GroEL ring, thereby capping the opening of the GroEL channel. The protein is Co-chaperonin GroES of Lactobacillus acidophilus (strain ATCC 700396 / NCK56 / N2 / NCFM).